The chain runs to 101 residues: Apolipoprotein C-II (101 aa).

The signal sequence occupies residues 1 to 22 (MGTRFLLALFLVLLVLGLEVQA). The interval 66–74 (AVDERIRDM) is lipid binding. A lipoprotein lipase cofactor region spans residues 78–101 (STAAVTTYAGIFTDQLFSMLKGEQ).

It belongs to the apolipoprotein C2 family. In terms of processing, proapolipoprotein C-II is synthesized as a sialic acid containing glycoprotein which is subsequently desialylated prior to its proteolytic processing. Post-translationally, proapolipoprotein C-II, the major form found in plasma undergoes proteolytic cleavage of its N-terminal hexapeptide to generate apolipoprotein C-II, which occurs as the minor form in plasma.

Its subcellular location is the secreted. Its function is as follows. Component of chylomicrons, very low-density lipoproteins (VLDL), low-density lipoproteins (LDL), and high-density lipoproteins (HDL) in plasma. Plays an important role in lipoprotein metabolism as an activator of lipoprotein lipase. Both proapolipoprotein C-II and apolipoprotein C-II can activate lipoprotein lipase. This chain is Apolipoprotein C-II (APOC2), found in Tupaia glis (Common tree shrew).